A 466-amino-acid chain; its full sequence is Ribulose bisphosphate carboxylase large chain (466 aa).

Position 5 is an N6,N6,N6-trimethyllysine (lysine 5). Substrate contacts are provided by asparagine 114 and threonine 164. The Proton acceptor role is filled by lysine 166. Lysine 168 contacts substrate. The Mg(2+) site is built by lysine 192, aspartate 194, and glutamate 195. Lysine 192 carries the N6-carboxylysine modification. Histidine 285 acts as the Proton acceptor in catalysis. Substrate contacts are provided by arginine 286, histidine 318, and serine 370.

Belongs to the RuBisCO large chain family. Type I subfamily. As to quaternary structure, heterohexadecamer of 8 large chains and 8 small chains; disulfide-linked. The disulfide link is formed within the large subunit homodimers. Requires Mg(2+) as cofactor. The disulfide bond which can form in the large chain dimeric partners within the hexadecamer appears to be associated with oxidative stress and protein turnover.

Its subcellular location is the plastid. The protein resides in the chloroplast. It catalyses the reaction 2 (2R)-3-phosphoglycerate + 2 H(+) = D-ribulose 1,5-bisphosphate + CO2 + H2O. The catalysed reaction is D-ribulose 1,5-bisphosphate + O2 = 2-phosphoglycolate + (2R)-3-phosphoglycerate + 2 H(+). RuBisCO catalyzes two reactions: the carboxylation of D-ribulose 1,5-bisphosphate, the primary event in carbon dioxide fixation, as well as the oxidative fragmentation of the pentose substrate in the photorespiration process. Both reactions occur simultaneously and in competition at the same active site. The sequence is that of Ribulose bisphosphate carboxylase large chain from Moringa oleifera (Horseradish tree).